We begin with the raw amino-acid sequence, 337 residues long: tRNA N6-adenosine threonylcarbamoyltransferase (337 aa).

Residues histidine 111 and histidine 115 each contribute to the Fe cation site. Substrate contacts are provided by residues 134–138, aspartate 167, glycine 180, and asparagine 272; that span reads LVSGG. Aspartate 300 contributes to the Fe cation binding site.

The protein belongs to the KAE1 / TsaD family. Requires Fe(2+) as cofactor.

Its subcellular location is the cytoplasm. The catalysed reaction is L-threonylcarbamoyladenylate + adenosine(37) in tRNA = N(6)-L-threonylcarbamoyladenosine(37) in tRNA + AMP + H(+). Functionally, required for the formation of a threonylcarbamoyl group on adenosine at position 37 (t(6)A37) in tRNAs that read codons beginning with adenine. Is involved in the transfer of the threonylcarbamoyl moiety of threonylcarbamoyl-AMP (TC-AMP) to the N6 group of A37, together with TsaE and TsaB. TsaD likely plays a direct catalytic role in this reaction. In Salmonella newport (strain SL254), this protein is tRNA N6-adenosine threonylcarbamoyltransferase.